A 580-amino-acid polypeptide reads, in one-letter code: Netrin-3 (580 aa).

A signal peptide spans 1-27; it reads MPGWPWGLLLTAGTLFAALSPGPPAPA. The region spanning 36 to 254 is the Laminin N-terminal domain; it reads APRGCVPGLV…AATDLQVGGR (219 aa). Residues 62-83 are disordered; sequence PATRACDASDPRRAHSPALLTS. 15 disulfide bridges follow: Cys-92–Cys-125, Cys-255–Cys-264, Cys-257–Cys-274, Cys-276–Cys-285, Cys-288–Cys-308, Cys-311–Cys-320, Cys-313–Cys-338, Cys-341–Cys-350, Cys-353–Cys-371, Cys-374–Cys-386, Cys-376–Cys-393, Cys-395–Cys-404, Cys-407–Cys-421, Cys-441–Cys-514, and Cys-460–Cys-577. N-linked (GlcNAc...) asparagine glycosylation occurs at Asn-104. Laminin EGF-like domains follow at residues 255–308, 311–371, and 374–421; these read CKCN…SHAC, CSCN…RRAC, and CDCH…VAPC. An N-linked (GlcNAc...) asparagine glycan is attached at Asn-387. An NTR domain is found at 441–577; sequence CDSHCKPARG…LQRRERRGRC (137 aa). The Cell attachment site; atypical motif lies at 500–502; that stretch reads RGS.

As to expression, spinal cord.

Its subcellular location is the secreted. The protein localises to the extracellular space. It is found in the extracellular matrix. Netrins control guidance of CNS commissural axons and peripheral motor axons. The chain is Netrin-3 (NTN3) from Homo sapiens (Human).